Consider the following 104-residue polypeptide: Urease subunit beta (104 aa).

This sequence belongs to the urease beta subunit family. In terms of assembly, heterotrimer of UreA (gamma), UreB (beta) and UreC (alpha) subunits. Three heterotrimers associate to form the active enzyme.

It is found in the cytoplasm. The catalysed reaction is urea + 2 H2O + H(+) = hydrogencarbonate + 2 NH4(+). It functions in the pathway nitrogen metabolism; urea degradation; CO(2) and NH(3) from urea (urease route): step 1/1. In Rhodopseudomonas palustris (strain BisB5), this protein is Urease subunit beta.